The sequence spans 414 residues: Isocitrate dehydrogenase [NADP] cytoplasmic (414 aa).

Ser-2 bears the N-acetylserine mark. A Phosphotyrosine modification is found at Tyr-42. 75–77 (TIT) contributes to the NADP(+) binding site. Residue Thr-77 coordinates substrate. Lys-81 is modified (N6-acetyllysine). Arg-82 contributes to the NADP(+) binding site. Substrate-binding positions include 94-100 (SPNGTIR) and Arg-109. The residue at position 126 (Lys-126) is an N6-succinyllysine. Substrate contacts are provided by Arg-132 and Lys-212. Lys-224, Lys-233, and Lys-243 each carry N6-acetyllysine. Asp-252 is a Mn(2+) binding site. Lys-260 is a binding site for NADP(+). The Mn(2+) site is built by Asp-275 and Asp-279. 310–315 (GTVTRH) lines the NADP(+) pocket. The residue at position 321 (Lys-321) is an N6-acetyllysine. Asn-328 is a binding site for NADP(+). Ser-389 is subject to Phosphoserine. The residue at position 400 (Lys-400) is an N6-succinyllysine.

It belongs to the isocitrate and isopropylmalate dehydrogenases family. In terms of assembly, homodimer. Mg(2+) is required as a cofactor. Requires Mn(2+) as cofactor. In terms of processing, acetylation at Lys-374 dramatically reduces catalytic activity.

The protein localises to the cytoplasm. Its subcellular location is the cytosol. It carries out the reaction D-threo-isocitrate + NADP(+) = 2-oxoglutarate + CO2 + NADPH. Functionally, catalyzes the NADP(+)-dependent oxidative decarboxylation of isocitrate (D-threo-isocitrate) to 2-ketoglutarate (2-oxoglutarate), which is required by other enzymes such as the phytanoyl-CoA dioxygenase. Plays a critical role in the generation of NADPH, an important cofactor in many biosynthesis pathways. May act as a corneal epithelial crystallin and may be involved in maintaining corneal epithelial transparency. This is Isocitrate dehydrogenase [NADP] cytoplasmic (IDH1) from Pongo abelii (Sumatran orangutan).